The chain runs to 784 residues: LPS-assembly protein LptD (784 aa).

Residues 1–24 (MKKRIPTLLATMIATALYSQQGLA) form the signal peptide. 2 disulfides stabilise this stretch: cysteine 31/cysteine 724 and cysteine 173/cysteine 725.

The protein belongs to the LptD family. As to quaternary structure, component of the lipopolysaccharide transport and assembly complex. Interacts with LptE and LptA. Post-translationally, contains two intramolecular disulfide bonds.

The protein localises to the cell outer membrane. In terms of biological role, together with LptE, is involved in the assembly of lipopolysaccharide (LPS) at the surface of the outer membrane. The chain is LPS-assembly protein LptD from Shigella sonnei (strain Ss046).